The sequence spans 254 residues: Diphthine synthase (254 aa).

Residues leucine 11, aspartate 87, isoleucine 90, 115-116 (SV), leucine 167, leucine 208, and histidine 233 each bind S-adenosyl-L-methionine.

The protein belongs to the diphthine synthase family. Homodimer.

It carries out the reaction 2-[(3S)-amino-3-carboxypropyl]-L-histidyl-[translation elongation factor 2] + 3 S-adenosyl-L-methionine = diphthine-[translation elongation factor 2] + 3 S-adenosyl-L-homocysteine + 3 H(+). The protein operates within protein modification; peptidyl-diphthamide biosynthesis. Functionally, S-adenosyl-L-methionine-dependent methyltransferase that catalyzes the trimethylation of the amino group of the modified target histidine residue in translation elongation factor 2 (EF-2), to form an intermediate called diphthine. The three successive methylation reactions represent the second step of diphthamide biosynthesis. This Metallosphaera sedula (strain ATCC 51363 / DSM 5348 / JCM 9185 / NBRC 15509 / TH2) protein is Diphthine synthase.